We begin with the raw amino-acid sequence, 428 residues long: 3-phosphoshikimate 1-carboxyvinyltransferase (428 aa).

3 residues coordinate 3-phosphoshikimate: Lys-21, Ser-22, and Arg-26. Lys-21 is a phosphoenolpyruvate binding site. 2 residues coordinate phosphoenolpyruvate: Gly-91 and Arg-119. 3-phosphoshikimate is bound by residues Ser-164, Gln-166, Asp-313, and Lys-340. Residue Gln-166 participates in phosphoenolpyruvate binding. Residue Asp-313 is the Proton acceptor of the active site. Residues Arg-344 and Arg-386 each contribute to the phosphoenolpyruvate site.

Belongs to the EPSP synthase family. As to quaternary structure, monomer.

The protein resides in the cytoplasm. The enzyme catalyses 3-phosphoshikimate + phosphoenolpyruvate = 5-O-(1-carboxyvinyl)-3-phosphoshikimate + phosphate. It functions in the pathway metabolic intermediate biosynthesis; chorismate biosynthesis; chorismate from D-erythrose 4-phosphate and phosphoenolpyruvate: step 6/7. In terms of biological role, catalyzes the transfer of the enolpyruvyl moiety of phosphoenolpyruvate (PEP) to the 5-hydroxyl of shikimate-3-phosphate (S3P) to produce enolpyruvyl shikimate-3-phosphate and inorganic phosphate. The protein is 3-phosphoshikimate 1-carboxyvinyltransferase of Campylobacter jejuni (strain RM1221).